A 277-amino-acid chain; its full sequence is Shikimate dehydrogenase (NADP(+)) (277 aa).

Shikimate is bound by residues 15-17 and threonine 62; that span reads SKS. The Proton acceptor role is filled by lysine 66. Residue glutamate 78 coordinates NADP(+). Residues asparagine 87 and aspartate 103 each contribute to the shikimate site. Residues 127-131, 151-156, and glycine 238 each bind NADP(+); these read GAGGA and NRTHEK.

This sequence belongs to the shikimate dehydrogenase family. Homodimer.

The catalysed reaction is shikimate + NADP(+) = 3-dehydroshikimate + NADPH + H(+). It functions in the pathway metabolic intermediate biosynthesis; chorismate biosynthesis; chorismate from D-erythrose 4-phosphate and phosphoenolpyruvate: step 4/7. Its function is as follows. Involved in the biosynthesis of the chorismate, which leads to the biosynthesis of aromatic amino acids. Catalyzes the reversible NADPH linked reduction of 3-dehydroshikimate (DHSA) to yield shikimate (SA). The chain is Shikimate dehydrogenase (NADP(+)) from Shewanella frigidimarina (strain NCIMB 400).